A 315-amino-acid chain; its full sequence is Transaldolase (315 aa).

K131 functions as the Schiff-base intermediate with substrate in the catalytic mechanism.

This sequence belongs to the transaldolase family. Type 1 subfamily. Homodimer.

It is found in the cytoplasm. It catalyses the reaction D-sedoheptulose 7-phosphate + D-glyceraldehyde 3-phosphate = D-erythrose 4-phosphate + beta-D-fructose 6-phosphate. The protein operates within carbohydrate degradation; pentose phosphate pathway; D-glyceraldehyde 3-phosphate and beta-D-fructose 6-phosphate from D-ribose 5-phosphate and D-xylulose 5-phosphate (non-oxidative stage): step 2/3. Functionally, transaldolase is important for the balance of metabolites in the pentose-phosphate pathway. The chain is Transaldolase from Actinobacillus pleuropneumoniae serotype 7 (strain AP76).